The following is a 150-amino-acid chain: Histone H2A.1 (150 aa).

An N-acetylmethionine modification is found at Met-1. Basic residues-rich tracts occupy residues 1 to 24 (MDASTKTKKGAGGRKGGGPRKKSV) and 141 to 150 (SKAKKSPKKA). Disordered regions lie at residues 1 to 26 (MDASTKTKKGAGGRKGGGPRKKSVTR) and 128 to 150 (RKENAAASTPKSPSKAKKSPKKA). 2 consecutive short sequence motifs (SPKK motif) follow at residues 139-142 (SPSK) and 146-149 (SPKK).

The protein belongs to the histone H2A family. The nucleosome is a histone octamer containing two molecules each of H2A, H2B, H3 and H4 assembled in one H3-H4 heterotetramer and two H2A-H2B heterodimers. The octamer wraps approximately 147 bp of DNA. High expression in root meristematic tissues, moderate in whole shoot and very low in mature leaves.

It is found in the nucleus. Its subcellular location is the chromosome. Core component of nucleosome. Nucleosomes wrap and compact DNA into chromatin, limiting DNA accessibility to the cellular machineries which require DNA as a template. Histones thereby play a central role in transcription regulation, DNA repair, DNA replication and chromosomal stability. DNA accessibility is regulated via a complex set of post-translational modifications of histones, also called histone code, and nucleosome remodeling. The sequence is that of Histone H2A.1 from Pisum sativum (Garden pea).